Reading from the N-terminus, the 206-residue chain is GTP-binding protein YPT1 (206 aa).

Met-1 is subject to N-acetylmethionine. GTP is bound by residues Ser-17–Cys-23, Tyr-33–Thr-40, Gly-66, and Asn-121–Asp-124. Cys-23 carries the S-palmitoyl cysteine lipid modification. The Effector region signature appears at Tyr-37–Phe-45. The interval Asp-63–Gly-80 is interaction with GDI1. A lipid anchor (S-palmitoyl cysteine) is attached at Cys-123. A Glycyl lysine isopeptide (Lys-Gly) (interchain with G-Cter in ubiquitin) cross-link involves residue Lys-144. Ala-152–Leu-153 provides a ligand contact to GTP. Ser-172 and Ser-174 each carry phosphoserine. The tract at residues Met-173–Cys-206 is disordered. The tract at residues Gly-189–Gly-195 is interaction with GDI1. Residues Cys-205 and Cys-206 are each lipidated (S-geranylgeranyl cysteine).

Belongs to the small GTPase superfamily. Rab family. Forms a complex with the Rab escort protein (REP) MRS6, which is recognized by Rab geranylgeranyltransferase BET2-BET4. Interacts with the Rab GDP dissociation inhibitor GDI1, which can retrieve from and deliver to membranes the GDP-bound and prenylated form of YPT1. Interacts with YIP1, which is required for proper membrane targeting of prenylated YPT1. Interacts with YIF1, YIP3, YIP4 and YIP5. Post-translationally, prenylation is required for interaction with GDI1 and YIP1.

The protein resides in the endoplasmic reticulum membrane. It localises to the golgi apparatus membrane. It is found in the cytoplasm. The protein localises to the preautophagosomal structure membrane. Its activity is regulated as follows. Rab activation is generally mediated by a guanine exchange factor (GEF), while inactivation through hydrolysis of bound GTP is catalyzed by a GTPase activating protein (GAP). YPT1 is activated by the GEFs DSS4 and TRAPP complex, and inactivated by GAPs GYP1, GYP5 and GYP8. The small GTPases Rab are key regulators of intracellular membrane trafficking, from the formation of transport vesicles to their fusion with membranes. Rabs cycle between an inactive GDP-bound form and an active GTP-bound form that is able to recruit to membranes different set of downstream effectors directly responsible for vesicle formation, movement, tethering and fusion. YPT1 regulates the trafficking of secretory vesicles from the endoplasmic reticulum (ER) to the Golgi. Vesicular transport depends on shuttling of YPT1 between membrane and cytosol by GDI1, probably by recycling it to its membrane of origin after a vesicle fusion event. Plays a role in the initial events of the autophagic vacuole development which take place at specialized regions of the endoplasmic reticulum. Also involved in the recycling of membrane proteins. The polypeptide is GTP-binding protein YPT1 (YPT1) (Saccharomyces cerevisiae (strain ATCC 204508 / S288c) (Baker's yeast)).